A 177-amino-acid polypeptide reads, in one-letter code: MPPADIGELVAAHIRDIPDYPSPGIVFKDITPLLAEPAVFAAVVDALVRDYQHGTVDKVVGIEARGFIVAAPVAYHLGAGFVPMRKKGKLPYRTLETSYALEYGTATIEVHVDAFRPGDRVLVVDDVLATGGTAAAALELIDQASAKAVGLSFLIELSALGGRSRLPASMVRSLLRV.

Belongs to the purine/pyrimidine phosphoribosyltransferase family. As to quaternary structure, homodimer.

It localises to the cytoplasm. The enzyme catalyses AMP + diphosphate = 5-phospho-alpha-D-ribose 1-diphosphate + adenine. It participates in purine metabolism; AMP biosynthesis via salvage pathway; AMP from adenine: step 1/1. Functionally, catalyzes a salvage reaction resulting in the formation of AMP, that is energically less costly than de novo synthesis. This Acidothermus cellulolyticus (strain ATCC 43068 / DSM 8971 / 11B) protein is Adenine phosphoribosyltransferase.